We begin with the raw amino-acid sequence, 338 residues long: MSLILSNVILHKLVKNEQDELEVCLRNQLLENEEFTEALVSELHRVFNSKAGKGFGIFKTESEFGHWLGSVRKNETPFLEFSNKSAEKLKSELIKYPFAEEGILVIAEYQSLATEYLFVAVLPSNESMKVTDELNISATDYLDIAKMDIAARIDLSTWETDSDSNRYLTFIKGRVGRKVSDFFLDFLQADVGMDTKVQNQVLMQAVEDFCADERLEKEEKQQYRKQVYDYCNGQLQAGEELTVKELSGELPTSESGSNFYQFAEEQGYELEESFPVDRTALRKLTKFVGAGGGLSLNFDAMLLGERVFYDPETDTLTIKGTPPNLKDQLTRRLGSSES.

The tract at residues 319 to 338 (KGTPPNLKDQLTRRLGSSES) is disordered.

This sequence belongs to the YejK family.

The protein localises to the cytoplasm. It localises to the nucleoid. The protein is Nucleoid-associated protein VSAL_I1059 of Aliivibrio salmonicida (strain LFI1238) (Vibrio salmonicida (strain LFI1238)).